We begin with the raw amino-acid sequence, 527 residues long: MFGADGRPAIGTAAGKSWHFSRTMEELVHDLVSALEESSEQARGGFAETGEHSRNLSCPLKRQARKRRGRKRRSYNVHHPWETGHCLSEGSDSSLEEPSKDYREKHSNNKKDRSDSDDQMLVAKRRPSSNLSSSVRGKRLLWHESDFAVDSLGNRTLRRRRKVKRMAVDLPQDVSSKRTMTQLPEGCRDQDMDNDRASQYPEFTRKKVKKRKLKGIRPGPKTQEEGGVLESEERSQPNKDRMEYEEQKASDELRSESDTSSLSSTDAGLFTNDEGRQGDDEQSDWFYEKESGGACGIAGVVPWWEKDEPAELDTNLPDPVFESILSGSFPLMSHPGRGGFQARLSRLHGTPSKNIKKSSGAPPSMLSAPGPGSNKRMVHFSPDAHRHDHWFSPGARTEHGQHQLLRDNRAERGHKKSCSLKTASRQTSMHLGSLCTGDIKRRRKAAPLPGPTAAGIVGENAQPILESNIGNRMLQSMGWTPGSGLGRDGRGIAEPVQAVQRPKGLGLGFPLPKSSPTSPAPTSGNPA.

A disordered region spans residues 35-135; the sequence is LEESSEQARG…RPSSNLSSSV (101 aa). The segment covering 62 to 76 has biased composition (basic residues); it reads RQARKRRGRKRRSYN. Over residues 97–116 the composition is skewed to basic and acidic residues; it reads EPSKDYREKHSNNKKDRSDS. 3 positions are modified to phosphoserine: Ser-114, Ser-116, and Ser-145. 3 disordered regions span residues 175–281, 350–375, and 480–527; these read SSKR…GDDE, TPSKNIKKSSGAPPSMLSAPGPGSNK, and TPGS…GNPA. Basic and acidic residues predominate over residues 186-196; it reads GCRDQDMDNDR. A compositionally biased stretch (basic residues) spans 206-215; that stretch reads KKVKKRKLKG. The segment covering 231–257 has biased composition (basic and acidic residues); the sequence is SEERSQPNKDRMEYEEQKASDELRSES. The 47-residue stretch at 466-512 folds into the G-patch domain; sequence ESNIGNRMLQSMGWTPGSGLGRDGRGIAEPVQAVQRPKGLGLGFPLP. Positions 510-527 are enriched in low complexity; it reads PLPKSSPTSPAPTSGNPA.

In terms of assembly, interacts with DHX15.

The protein resides in the nucleus speckle. It is found in the nucleus. It localises to the nucleolus. Enhances the ATPase activity of DHX15 in vitro. In Mus musculus (Mouse), this protein is G patch domain-containing protein 2 (Gpatch2).